A 256-amino-acid polypeptide reads, in one-letter code: Triosephosphate isomerase (256 aa).

Asn-12–Lys-14 is a substrate binding site. The active-site Electrophile is His-99. Glu-171 acts as the Proton acceptor in catalysis. Residues Gly-177, Ser-217, and Gly-238–Gly-239 each bind substrate.

Belongs to the triosephosphate isomerase family. In terms of assembly, homodimer.

The protein localises to the cytoplasm. It catalyses the reaction D-glyceraldehyde 3-phosphate = dihydroxyacetone phosphate. Its pathway is carbohydrate biosynthesis; gluconeogenesis. It functions in the pathway carbohydrate degradation; glycolysis; D-glyceraldehyde 3-phosphate from glycerone phosphate: step 1/1. In terms of biological role, involved in the gluconeogenesis. Catalyzes stereospecifically the conversion of dihydroxyacetone phosphate (DHAP) to D-glyceraldehyde-3-phosphate (G3P). This Rubrobacter xylanophilus (strain DSM 9941 / JCM 11954 / NBRC 16129 / PRD-1) protein is Triosephosphate isomerase.